A 162-amino-acid polypeptide reads, in one-letter code: NADH-quinone oxidoreductase subunit I (162 aa).

4Fe-4S ferredoxin-type domains are found at residues 53–83 and 93–122; these read LRRYPNGEERCIACKLCEAICPALAITIEAE and TRYDIDLTKCIFCGFCEEACPVDAVVETRI. [4Fe-4S] cluster is bound by residues Cys-63, Cys-66, Cys-69, Cys-73, Cys-102, Cys-105, Cys-108, and Cys-112.

It belongs to the complex I 23 kDa subunit family. As to quaternary structure, NDH-1 is composed of 14 different subunits. Subunits NuoA, H, J, K, L, M, N constitute the membrane sector of the complex. The cofactor is [4Fe-4S] cluster.

The protein resides in the cell inner membrane. The enzyme catalyses a quinone + NADH + 5 H(+)(in) = a quinol + NAD(+) + 4 H(+)(out). In terms of biological role, NDH-1 shuttles electrons from NADH, via FMN and iron-sulfur (Fe-S) centers, to quinones in the respiratory chain. The immediate electron acceptor for the enzyme in this species is believed to be ubiquinone. Couples the redox reaction to proton translocation (for every two electrons transferred, four hydrogen ions are translocated across the cytoplasmic membrane), and thus conserves the redox energy in a proton gradient. In Dechloromonas aromatica (strain RCB), this protein is NADH-quinone oxidoreductase subunit I.